The following is a 515-amino-acid chain: Protein pid-4 (515 aa).

Residues 496-515 (DRSPQKFKFPASGSYMKPAN) are disordered.

In terms of assembly, may interact with pid-2, app-1 and prmt-5.

Its subcellular location is the cytoplasm. It localises to the perinuclear region. The protein resides in the P-body. Together with pid-5, it is involved in gene silencing mediated by a class of 21 nucleotide PIWI-interacting RNAs (piRNAs) that possess a uracil residue at the 5'-end (also called 21U-RNAs) and guide the Piwi protein prg-1 to its DNA targets for silencing. Together with pid-5, it is required for the biogenesis of secondary and tertiary 22G-siRNAs. Specifically, promotes the production of 22G-siRNAs from the 5' end of target mRNAs. Together with pid-5, plays a role in small RNA-directed transgenerational epigenetic inheritance (also called RNAe) over several generations and germline immortality. Together with pid-5, plays a role in the formation of liquid-like condensates in the cytoplasm called Z granules. This is Protein pid-4 from Caenorhabditis elegans.